The sequence spans 143 residues: NADH-quinone oxidoreductase subunit A (143 aa).

Helical transmembrane passes span 8–28 (FGNVFAFLALGVVFVAGGYLT), 63–83 (FYVVALIFIIFDVEVVFLYPW), and 93–113 (FALIEALVFAGILVLGLAYAW).

Belongs to the complex I subunit 3 family. As to quaternary structure, NDH-1 is composed of 14 different subunits. Subunits NuoA, H, J, K, L, M, N constitute the membrane sector of the complex.

It localises to the cell inner membrane. It carries out the reaction a quinone + NADH + 5 H(+)(in) = a quinol + NAD(+) + 4 H(+)(out). Functionally, NDH-1 shuttles electrons from NADH, via FMN and iron-sulfur (Fe-S) centers, to quinones in the respiratory chain. The immediate electron acceptor for the enzyme in this species is believed to be a menaquinone. Couples the redox reaction to proton translocation (for every two electrons transferred, four hydrogen ions are translocated across the cytoplasmic membrane), and thus conserves the redox energy in a proton gradient. In Pelodictyon phaeoclathratiforme (strain DSM 5477 / BU-1), this protein is NADH-quinone oxidoreductase subunit A.